We begin with the raw amino-acid sequence, 372 residues long: Aminomethyltransferase (372 aa).

This sequence belongs to the GcvT family. In terms of assembly, the glycine cleavage system is composed of four proteins: P, T, L and H.

It catalyses the reaction N(6)-[(R)-S(8)-aminomethyldihydrolipoyl]-L-lysyl-[protein] + (6S)-5,6,7,8-tetrahydrofolate = N(6)-[(R)-dihydrolipoyl]-L-lysyl-[protein] + (6R)-5,10-methylene-5,6,7,8-tetrahydrofolate + NH4(+). Functionally, the glycine cleavage system catalyzes the degradation of glycine. The polypeptide is Aminomethyltransferase (Burkholderia multivorans (strain ATCC 17616 / 249)).